The following is a 447-amino-acid chain: UMP-CMP kinase 2, mitochondrial (447 aa).

The transit peptide at 1 to 73 (MALISRPRAP…ELLGPPGRSY (73 aa)) directs the protein to the mitochondrion. 259 to 266 (GLDATGKT) provides a ligand contact to ATP. A coiled-coil region spans residues 380-412 (EERVRRLQGRGQEKTKEEAELEANNVFRQKVEM).

Belongs to the thymidylate kinase family. As to expression, strongly expressed in the brain.

Its subcellular location is the mitochondrion. It carries out the reaction CMP + ATP = CDP + ADP. The catalysed reaction is dCMP + ATP = dCDP + ADP. It catalyses the reaction a 2'-deoxyribonucleoside 5'-diphosphate + ATP = a 2'-deoxyribonucleoside 5'-triphosphate + ADP. The enzyme catalyses a ribonucleoside 5'-diphosphate + ATP = a ribonucleoside 5'-triphosphate + ADP. Functionally, mitochondrial nucleotide monophosphate kinase needed for salvage dNTP synthesis that mediates immunomodulatory and antiviral activities through IFN-dependent and IFN-independent pathways. Restricts the replication of multiple viruses including flaviviruses or coronaviruses. Together with viperin/RSAD2 and ddhCTP, suppresses the replication of several coronaviruses through inhibition of the viral RNA-dependent RNA polymerase activities. Concerning flaviviruses, restricts RNA translation when localized to the mitochondria independently of its kinase activity. Is able to phosphorylate dUMP, dCMP, CMP, UMP and monophosphates of the pyrimidine nucleoside analogs ddC, dFdC, araC, BVDU and FdUrd with ATP as phosphate donor. Efficacy is highest for dUMP followed by dCMP while CMP and UMP are poor substrates. Controls therefore mitochondrial DNA synthesis by supplying required deoxyribonucleotides. CMPK2-dependent mitochondrial DNA synthesis is necessary for the production of oxidized mitochondrial DNA fragments after exposure to NLRP3 activators. In turn, cytosolic oxidized mtDNA associates with the NLRP3 inflammasome complex and is required for its activation. This is UMP-CMP kinase 2, mitochondrial (Cmpk2) from Mus musculus (Mouse).